The primary structure comprises 245 residues: Putative outer membrane protein RBE_0022 (245 aa).

The first 23 residues, 1–23 (MIRMSKRLGVILFVSCISINSFA), serve as a signal peptide directing secretion.

Belongs to the OmpW/AlkL family.

It is found in the cell outer membrane. The chain is Putative outer membrane protein RBE_0022 from Rickettsia bellii (strain RML369-C).